Consider the following 396-residue polypeptide: Probable glucan endo-1,6-beta-glucosidase B (396 aa).

A signal peptide spans 1–17 (MIRRLAAFSALSGLATA). Residue Asn30 is glycosylated (N-linked (GlcNAc...) asparagine). Glu219 acts as the Proton donor in catalysis. N-linked (GlcNAc...) asparagine glycosylation occurs at Asn272. The Nucleophile role is filled by Glu320.

This sequence belongs to the glycosyl hydrolase 5 (cellulase A) family.

The protein resides in the secreted. It catalyses the reaction Random hydrolysis of (1-&gt;6)-linkages in (1-&gt;6)-beta-D-glucans.. In terms of biological role, beta-glucanases participate in the metabolism of beta-glucan, the main structural component of the cell wall. Acts on lutean, pustulan and 1,6-oligo-beta-D-glucosides. The sequence is that of Probable glucan endo-1,6-beta-glucosidase B (exgB) from Aspergillus fumigatus (strain CBS 144.89 / FGSC A1163 / CEA10) (Neosartorya fumigata).